We begin with the raw amino-acid sequence, 854 residues long: Probable disease resistance protein At1g51480 (854 aa).

A coiled-coil region spans residues 25–62; the sequence is RNYIHKMEANLDDLHTTMEELKNGRDDLLRRVSIEEDK. The NB-ARC domain occupies 138–441; sequence AHKIPVPKVE…CEGYINPNRY (304 aa). 180 to 187 contacts ATP; it reads GMGGVGKT. 6 LRR repeats span residues 514-535, 536-557, 560-582, 584-605, 607-629, and 631-652; these read IVRQVSLISTQIEKISCSSKCS, NLSTLLLPYNKLVNISVGFFLF, KLVVLDLSTNMSLIELPEEISNL, SLQYLNLSSTGIKSLPGGMKKL, KLIYLNLEFSYKLESLVGISATL, and NLQVLKLFYSNVCVDDILMEEL.

The protein belongs to the disease resistance NB-LRR family.

Its function is as follows. Probable disease resistance protein. The chain is Probable disease resistance protein At1g51480 from Arabidopsis thaliana (Mouse-ear cress).